Reading from the N-terminus, the 198-residue chain is Recombination protein RecR (198 aa).

Residues 57–72 (CSVCGNLTDEDPCSIC) form a C4-type zinc finger. Residues 80–175 (SMILVVEDSK…KVTRLARGLA (96 aa)) enclose the Toprim domain.

It belongs to the RecR family.

May play a role in DNA repair. It seems to be involved in an RecBC-independent recombinational process of DNA repair. It may act with RecF and RecO. In Streptococcus uberis (strain ATCC BAA-854 / 0140J), this protein is Recombination protein RecR.